Here is a 159-residue protein sequence, read N- to C-terminus: Ribosome maturation factor RimP (159 aa).

It belongs to the RimP family.

It localises to the cytoplasm. Required for maturation of 30S ribosomal subunits. The sequence is that of Ribosome maturation factor RimP from Streptococcus pneumoniae serotype 2 (strain D39 / NCTC 7466).